The sequence spans 135 residues: Large ribosomal subunit protein uL16m (135 aa).

It belongs to the universal ribosomal protein uL16 family.

The protein localises to the mitochondrion. The protein is Large ribosomal subunit protein uL16m (RPL16) of Marchantia polymorpha (Common liverwort).